We begin with the raw amino-acid sequence, 888 residues long: Molybdenum cofactor sulfurase (888 aa).

Ser34 carries the phosphoserine modification. Lys264 bears the N6-(pyridoxal phosphate)lysine mark. The active site involves Cys424. A phosphoserine mark is found at Ser528 and Ser530. Positions 706 to 867 (KQSSNSQRNA…LSVGSQVLPV (162 aa)) constitute an MOSC domain.

Belongs to the class-V pyridoxal-phosphate-dependent aminotransferase family. MOCOS subfamily. Requires pyridoxal 5'-phosphate as cofactor.

It catalyses the reaction Mo-molybdopterin + L-cysteine + AH2 = thio-Mo-molybdopterin + L-alanine + A + H2O. It functions in the pathway cofactor biosynthesis; molybdopterin biosynthesis. Functionally, sulfurates the molybdenum cofactor. Sulfation of molybdenum is essential for xanthine dehydrogenase (XDH) and aldehyde oxidase (ADO) enzymes in which molybdenum cofactor is liganded by 1 oxygen and 1 sulfur atom in active form. In vitro, the C-terminal domain is able to reduce N-hydroxylated prodrugs, such as benzamidoxime. This chain is Molybdenum cofactor sulfurase, found in Homo sapiens (Human).